The primary structure comprises 539 residues: Aluminum-activated malate transporter 13 (539 aa).

6 helical membrane passes run 57 to 77 (VGVA…FEGV), 80 to 100 (NALW…GATL), 107 to 127 (GLGT…AIHS), 130 to 150 (ILGG…ITYM), 165 to 185 (LVFL…DTVI), and 192 to 212 (LYTI…FFPI).

The protein belongs to the aromatic acid exporter (TC 2.A.85) family.

The protein resides in the membrane. Its function is as follows. Malate transporter. The sequence is that of Aluminum-activated malate transporter 13 (ALMT13) from Arabidopsis thaliana (Mouse-ear cress).